The sequence spans 379 residues: MDETYEENEKVLVHHQNRIYEAKIIKVDPKTSKSDKKKPLYFIHYLGWKEKWNEWIEPNKILKYTDKNRELQKRTNIKASTTSLNNKKNTKKAKEVKQQQQQQQPIAYDSENSDEDENESELEDGGGEDADEGGEDIEDQENNNNNDTGGEEADDNNTSPRSTGSSSSSSSSKSNNNNNNNNNNNNNNNNNNNNNNNNNNKRKRNDSKSSHFQSTKFIDIEIPLSLKNKLVDDWNSINNEKSILSLPKSPNVKDILNKIIEENDKSSECKEVINGIKQYFNKALGTLLLYKFERPQYDSILKTNPKKSMSDIYGAEHLLRLFVKLPQLLVISNLEEKTITQLKDAFEIVLEYLEKNSSTLFLKEYTIASSPYLKAASSN.

Positions glutamate 6–isoleucine 61 constitute a Tudor-knot domain. The tract at residues threonine 75 to phenylalanine 212 is disordered. Residues lysine 78–lysine 87 show a composition bias toward low complexity. Positions glutamate 111–glutamate 141 are enriched in acidic residues. The span at serine 165–asparagine 199 shows a compositional bias: low complexity. The MRG domain occupies serine 214–serine 377.

In terms of assembly, component of the NuA4 histone acetyltransferase complex.

It localises to the nucleus. Functionally, component of the NuA4 histone acetyltransferase complex which is involved in transcriptional activation of selected genes principally by acetylation of nucleosomal histone H4 and H2A. The NuA4 complex is also involved in DNA repair. Also a component of a complex which acts to repress transcription by deacetylation of nucleosomal histones. The chain is NuA4 complex subunit EAF3 homolog from Dictyostelium discoideum (Social amoeba).